We begin with the raw amino-acid sequence, 297 residues long: Small ribosomal subunit protein uS2 (297 aa).

A disordered region spans residues 266–297 (GASWDAAEPSDWAATPAAAGQEWAASGATEQW). Residues 282-297 (AAAGQEWAASGATEQW) are compositionally biased toward low complexity.

This sequence belongs to the universal ribosomal protein uS2 family. Component of the small ribosomal subunit. Mature ribosomes consist of a small (40S) and a large (60S) subunit. The 40S subunit contains about 33 different proteins and 1 molecule of RNA (18S). The 60S subunit contains about 49 different proteins and 3 molecules of RNA (25S, 5.8S and 5S). Interacts with rps21.

The protein localises to the cytoplasm. Its function is as follows. Required for the assembly and/or stability of the 40S ribosomal subunit. Required for the processing of the 20S rRNA-precursor to mature 18S rRNA in a late step of the maturation of 40S ribosomal subunits. The protein is Small ribosomal subunit protein uS2 (rps0) of Sclerotinia sclerotiorum (strain ATCC 18683 / 1980 / Ss-1) (White mold).